A 533-amino-acid polypeptide reads, in one-letter code: MEMKSNYVDIFKREIFPAKVRVEKGKIASIERIDTPCDTYILPGFVDAHIHIESSMLPPSEFARLAVCHGTVATVSDPHEIANVLGIPGVGYMLDNSEMTPFKFYFGASPCVPATTFETSGATLGPDEIESLLKMPQIKYLSEVMNFPGVINGDPDMLAKIAKAKALHKRIDGHAPGLRGDELTKYIEAGIETDHEAFTYEEGLEKLQKGMKILIREGSAAKNFEALAPLIPAYPNKLMFCSDDRHPNDLAREHIDGHVRRAIAKGYDLFDVLRIASVNPVEHYGLEVGLLRVGDPADFIVVEDLKDFKVLQTVIDGEIVARGKKPLIDSVTVETPNHFHTGIKKEEDFILERCVHTEIIHALDHSLITEEEIMDLSSGKAKDVLKITVVNRYEDVKPAVAYVHGFGLKKGAIASSVAHDSHNIIAVGCSDALIAKAVNTIIGNRGGICAVTEEEIEVLSLPIAGLMSDKDGFEVANRYADLDRMVREYFTSLLSAPFMTLSFMALLVIPELKLSDKGLFDGRSFHFIDSCRR.

Belongs to the metallo-dependent hydrolases superfamily. Adenine deaminase family. The cofactor is Mn(2+).

It catalyses the reaction adenine + H2O + H(+) = hypoxanthine + NH4(+). This is Adenine deaminase from Sulfurovum sp. (strain NBC37-1).